Here is a 143-residue protein sequence, read N- to C-terminus: Large ribosomal subunit protein uL11 (143 aa).

This sequence belongs to the universal ribosomal protein uL11 family. Part of the ribosomal stalk of the 50S ribosomal subunit. Interacts with L10 and the large rRNA to form the base of the stalk. L10 forms an elongated spine to which L12 dimers bind in a sequential fashion forming a multimeric L10(L12)X complex. One or more lysine residues are methylated.

Its function is as follows. Forms part of the ribosomal stalk which helps the ribosome interact with GTP-bound translation factors. In Erythrobacter litoralis (strain HTCC2594), this protein is Large ribosomal subunit protein uL11.